Here is a 243-residue protein sequence, read N- to C-terminus: Transcription factor TFIIS homolog (243 aa).

Residues 77 to 201 (MRDIIQMMFF…SQQKVAEKTS (125 aa)) form the TFIIS central domain. The segment at 202-242 (QLYKCPNCKQRMCTYREVQTRALDEPSTIYCTCKKCGHEFI) adopts a TFIIS-type zinc-finger fold. Residues Cys-206, Cys-209, Cys-234, and Cys-237 each contribute to the Zn(2+) site.

The protein belongs to the TFS-II family.

Putative initiation factor. Necessary for efficient transcription elongation past template-encoded arresting sites. In African swine fever virus (isolate Pig/Kenya/KEN-50/1950) (ASFV), this protein is Transcription factor TFIIS homolog.